Here is a 214-residue protein sequence, read N- to C-terminus: Putative pyrophosphatase PpaX (214 aa).

Asp-8 functions as the Nucleophile in the catalytic mechanism.

The protein belongs to the HAD-like hydrolase superfamily. PpaX family. It depends on Mg(2+) as a cofactor.

The enzyme catalyses diphosphate + H2O = 2 phosphate + H(+). This is Putative pyrophosphatase PpaX from Clostridium perfringens (strain 13 / Type A).